A 208-amino-acid chain; its full sequence is Putative dioxygenase RF_0617 (208 aa).

It belongs to the intradiol ring-cleavage dioxygenase family.

This Rickettsia felis (strain ATCC VR-1525 / URRWXCal2) (Rickettsia azadi) protein is Putative dioxygenase RF_0617.